A 554-amino-acid chain; its full sequence is 5'-AMP-activated protein kinase catalytic subunit alpha-1 (554 aa).

The Protein kinase domain occupies 22–274 (YILGDTLGVG…IKDIREHEWF (253 aa)). Position 27 is a phosphothreonine (Thr27). Residues 28 to 36 (LGVGTFGKV) and Lys51 contribute to the ATP site. Asp145 (proton acceptor) is an active-site residue. Position 178 is a phosphothreonine; by LKB1 and CaMKK2 (Thr178). Thr264 and Thr350 each carry phosphothreonine. The segment at 297 to 376 (EALKEVCEKF…PERVPFLVAE (80 aa)) is AIS. Ser351 carries the post-translational modification Phosphoserine. Ser355 carries the phosphoserine; by ULK1 modification. At Thr363 the chain carries Phosphothreonine; by ULK1. At Thr377 the chain carries Phosphothreonine. Ser392 carries the phosphoserine; by ULK1 modification. At Ser462 the chain carries Phosphoserine. Positions 480–500 (KSGTATPQRSGSVSNYRSCQR) are enriched in polar residues. A disordered region spans residues 480–531 (KSGTATPQRSGSVSNYRSCQRSDSDAEAQGKSSEVSLTSSVTSLDSSPVDLT). Ser481 bears the Phosphoserine; by ULK1 mark. Residue Thr483 is modified to Phosphothreonine; by ULK1. Position 485 is a phosphothreonine (Thr485). Phosphoserine is present on residues Ser491, Ser503, Ser519, and Ser522. The segment covering 511–530 (SSEVSLTSSVTSLDSSPVDL) has biased composition (low complexity).

This sequence belongs to the protein kinase superfamily. CAMK Ser/Thr protein kinase family. SNF1 subfamily. In terms of assembly, AMPK is a heterotrimer of an alpha catalytic subunit (PRKAA1 or PRKAA2), a beta (PRKAB1 or PRKAB2) and a gamma non-catalytic subunits (PRKAG1, PRKAG2 or PRKAG3). Interacts with FNIP1 and FNIP2. Mg(2+) is required as a cofactor. Post-translationally, ubiquitinated. In terms of processing, phosphorylated at Thr-183 by STK11/LKB1 in complex with STE20-related adapter-alpha (STRADA) pseudo kinase and CAB39. Also phosphorylated at Thr-183 by CAMKK2; triggered by a rise in intracellular calcium ions, without detectable changes in the AMP/ATP ratio. CAMKK1 can also phosphorylate Thr-183, but at a much lower level. Dephosphorylated by protein phosphatase 2A and 2C (PP2A and PP2C). Phosphorylated by ULK1 and ULK2; leading to negatively regulate AMPK activity and suggesting the existence of a regulatory feedback loop between ULK1, ULK2 and AMPK. Dephosphorylated by PPM1A and PPM1B. Glycosylated; O-GlcNAcylated by OGT, promoting the AMP-activated protein kinase (AMPK) activity.

It is found in the cytoplasm. The protein resides in the nucleus. The catalysed reaction is L-seryl-[protein] + ATP = O-phospho-L-seryl-[protein] + ADP + H(+). It carries out the reaction L-threonyl-[protein] + ATP = O-phospho-L-threonyl-[protein] + ADP + H(+). The enzyme catalyses L-seryl-[acetyl-CoA carboxylase] + ATP = O-phospho-L-seryl-[acetyl-CoA carboxylase] + ADP + H(+). It catalyses the reaction L-seryl-[3-hydroxy-3-methylglutaryl-coenzyme A reductase] + ATP = O-phospho-L-seryl-[3-hydroxy-3-methylglutaryl-coenzyme A reductase] + ADP + H(+). The catalysed reaction is L-seryl-[tau protein] + ATP = O-phospho-L-seryl-[tau protein] + ADP + H(+). It carries out the reaction L-threonyl-[tau protein] + ATP = O-phospho-L-threonyl-[tau protein] + ADP + H(+). Activated by phosphorylation on Thr-183. Binding of AMP to non-catalytic gamma subunit (PRKAG1, PRKAG2 or PRKAG3) results in allosteric activation, inducing phosphorylation on Thr-183. AMP-binding to gamma subunit also sustains activity by preventing dephosphorylation of Thr-183. ADP also stimulates Thr-183 phosphorylation, without stimulating already phosphorylated AMPK. ATP promotes dephosphorylation of Thr-183, rendering the enzyme inactive. Under physiological conditions AMPK mainly exists in its inactive form in complex with ATP, which is much more abundant than AMP. Selectively inhibited by compound C (6-[4-(2-Piperidin-1-yl-ethoxy)-phenyl)]-3-pyridin-4-yl-pyyrazolo[1,5-a] pyrimidine. Activated by resveratrol, a natural polyphenol present in red wine, and S17834, a synthetic polyphenol. Functionally, catalytic subunit of AMP-activated protein kinase (AMPK), an energy sensor protein kinase that plays a key role in regulating cellular energy metabolism. In response to reduction of intracellular ATP levels, AMPK activates energy-producing pathways and inhibits energy-consuming processes: inhibits protein, carbohydrate and lipid biosynthesis, as well as cell growth and proliferation. AMPK acts via direct phosphorylation of metabolic enzymes, and by longer-term effects via phosphorylation of transcription regulators. Regulates lipid synthesis by phosphorylating and inactivating lipid metabolic enzymes such as ACACA, ACACB, GYS1, HMGCR and LIPE; regulates fatty acid and cholesterol synthesis by phosphorylating acetyl-CoA carboxylase (ACACA and ACACB) and hormone-sensitive lipase (LIPE) enzymes, respectively. Promotes lipolysis of lipid droplets by mediating phosphorylation of isoform 1 of CHKA (CHKalpha2). Regulates insulin-signaling and glycolysis by phosphorylating IRS1, PFKFB2 and PFKFB3. AMPK stimulates glucose uptake in muscle by increasing the translocation of the glucose transporter SLC2A4/GLUT4 to the plasma membrane, possibly by mediating phosphorylation of TBC1D4/AS160. Regulates transcription and chromatin structure by phosphorylating transcription regulators involved in energy metabolism such as CRTC2/TORC2, FOXO3, histone H2B, HDAC5, MEF2C, MLXIPL/ChREBP, EP300, HNF4A, p53/TP53, SREBF1, SREBF2 and PPARGC1A. Acts as a key regulator of glucose homeostasis in liver by phosphorylating CRTC2/TORC2, leading to CRTC2/TORC2 sequestration in the cytoplasm. In response to stress, phosphorylates 'Ser-36' of histone H2B (H2BS36ph), leading to promote transcription. Acts as a key regulator of cell growth and proliferation by phosphorylating FNIP1, TSC2, RPTOR, WDR24 and ATG1/ULK1: in response to nutrient limitation, negatively regulates the mTORC1 complex by phosphorylating RPTOR component of the mTORC1 complex and by phosphorylating and activating TSC2. Also phosphorylates and inhibits GATOR2 subunit WDR24 in response to nutrient limitation, leading to suppress glucose-mediated mTORC1 activation. In response to energetic stress, phosphorylates FNIP1, inactivating the non-canonical mTORC1 signaling, thereby promoting nuclear translocation of TFEB and TFE3, and inducing transcription of lysosomal or autophagy genes. In response to nutrient limitation, promotes autophagy by phosphorylating and activating ATG1/ULK1. In that process also activates WDR45/WIPI4. Phosphorylates CASP6, thereby preventing its autoprocessing and subsequent activation. In response to nutrient limitation, phosphorylates transcription factor FOXO3 promoting FOXO3 mitochondrial import. Also acts as a regulator of cellular polarity by remodeling the actin cytoskeleton; probably by indirectly activating myosin. AMPK also acts as a regulator of circadian rhythm by mediating phosphorylation of CRY1, leading to destabilize it. May regulate the Wnt signaling pathway by phosphorylating CTNNB1, leading to stabilize it. Also has tau-protein kinase activity: in response to amyloid beta A4 protein (APP) exposure, activated by CAMKK2, leading to phosphorylation of MAPT/TAU; however the relevance of such data remains unclear in vivo. Also phosphorylates CFTR, EEF2K, KLC1, NOS3 and SLC12A1. Regulates hepatic lipogenesis. Activated via SIRT3, represses sterol regulatory element-binding protein (SREBP) transcriptional activities and ATP-consuming lipogenesis to restore cellular energy balance. Upon stress, regulates mitochondrial fragmentation through phosphorylation of MTFR1L. The polypeptide is 5'-AMP-activated protein kinase catalytic subunit alpha-1 (PRKAA1) (Pongo abelii (Sumatran orangutan)).